We begin with the raw amino-acid sequence, 84 residues long: CDC42 small effector protein 2 (84 aa).

S-palmitoyl cysteine attachment occurs at residues Cys10 and Cys11. The CRIB domain occupies 29–42; sequence IGEPTNFVHTAHVG. Phosphoserine occurs at positions 43 and 52.

This sequence belongs to the CDC42SE/SPEC family. Interacts with CDC42 (in GTP-bound form). Interacts weakly with RAC1 and not at all with RHOA. In terms of tissue distribution, widely expressed. Expressed at higher level in T-lymphocytes. Highly expressed in CCRF-CEM T-lymphocytes, Jurkat T-lymphocytes, and Raji B-lymphocytes compared (at protein level).

It localises to the cytoplasm. The protein localises to the cytoskeleton. Its subcellular location is the cell membrane. The protein resides in the cell projection. It is found in the phagocytic cup. Functionally, probably involved in the organization of the actin cytoskeleton by acting downstream of CDC42, inducing actin filament assembly. Alters CDC42-induced cell shape changes. In activated T-cells, may play a role in CDC42-mediated F-actin accumulation at the immunological synapse. May play a role in early contractile events in phagocytosis in macrophages. This chain is CDC42 small effector protein 2 (CDC42SE2), found in Homo sapiens (Human).